A 199-amino-acid polypeptide reads, in one-letter code: Thymidylate kinase (199 aa).

ATP is bound at residue 7–14 (GTEGVGKT).

Belongs to the thymidylate kinase family.

The enzyme catalyses dTMP + ATP = dTDP + ADP. Functionally, phosphorylation of dTMP to form dTDP in both de novo and salvage pathways of dTTP synthesis. In Acinetobacter baumannii (strain ACICU), this protein is Thymidylate kinase.